The following is a 415-amino-acid chain: Multidrug resistance protein MdtA (415 aa).

Residues 1 to 21 (MKGSYKSRWVIVIVVVIAAIA) form the signal peptide. The segment covering 31–47 (DSQSAAPGATKQAQQSP) has biased composition (polar residues). Disordered regions lie at residues 31-60 (DSQSAAPGATKQAQQSPAGGRRGMRSGPLA) and 392-415 (EAQSATTPEEKATSREYAKKGARS). Over residues 399–415 (PEEKATSREYAKKGARS) the composition is skewed to basic and acidic residues.

It belongs to the membrane fusion protein (MFP) (TC 8.A.1) family. In terms of assembly, part of a tripartite efflux system composed of MdtA, MdtB and MdtC.

The protein localises to the cell inner membrane. In terms of biological role, the MdtABC tripartite complex confers resistance against novobiocin and deoxycholate. The protein is Multidrug resistance protein MdtA of Escherichia coli O157:H7.